A 202-amino-acid polypeptide reads, in one-letter code: Urease accessory protein UreG (202 aa).

13-20 (GPVGAGKT) contacts GTP.

This sequence belongs to the SIMIBI class G3E GTPase family. UreG subfamily. Homodimer. UreD, UreF and UreG form a complex that acts as a GTP-hydrolysis-dependent molecular chaperone, activating the urease apoprotein by helping to assemble the nickel containing metallocenter of UreC. The UreE protein probably delivers the nickel.

The protein resides in the cytoplasm. Facilitates the functional incorporation of the urease nickel metallocenter. This process requires GTP hydrolysis, probably effectuated by UreG. The chain is Urease accessory protein UreG from Dinoroseobacter shibae (strain DSM 16493 / NCIMB 14021 / DFL 12).